The primary structure comprises 191 residues: MELDEIKVFGRWSTKDVVVKDPGLRNYINLTPIYVPHTAGRYTKRQFEKAKMNIVERLVNKVMRREENTGKKLKALKIVENAFEIIEKRTKQNPIQVLVDAIENAGPREDTTRISYGGIVYLQSVDCSSLRRIDVALRNIALGAYMAAHKSKKPIEEALAEEIIAAARGDMQKSYAVRKKEETERVAQSAR.

The protein belongs to the universal ribosomal protein uS7 family. As to quaternary structure, part of the 30S ribosomal subunit.

In terms of biological role, one of the primary rRNA binding proteins, it binds directly to 16S rRNA where it nucleates assembly of the head domain of the 30S subunit. Is located at the subunit interface close to the decoding center. This is Small ribosomal subunit protein uS7 from Methanocaldococcus jannaschii (strain ATCC 43067 / DSM 2661 / JAL-1 / JCM 10045 / NBRC 100440) (Methanococcus jannaschii).